The chain runs to 267 residues: Ribosomal RNA small subunit methyltransferase A (267 aa).

S-adenosyl-L-methionine is bound by residues Leu20, Gly45, Glu68, Asp91, and Asn113.

This sequence belongs to the class I-like SAM-binding methyltransferase superfamily. rRNA adenine N(6)-methyltransferase family. RsmA subfamily.

It localises to the cytoplasm. It carries out the reaction adenosine(1518)/adenosine(1519) in 16S rRNA + 4 S-adenosyl-L-methionine = N(6)-dimethyladenosine(1518)/N(6)-dimethyladenosine(1519) in 16S rRNA + 4 S-adenosyl-L-homocysteine + 4 H(+). Its function is as follows. Specifically dimethylates two adjacent adenosines (A1518 and A1519) in the loop of a conserved hairpin near the 3'-end of 16S rRNA in the 30S particle. May play a critical role in biogenesis of 30S subunits. This Blochmanniella pennsylvanica (strain BPEN) protein is Ribosomal RNA small subunit methyltransferase A.